The sequence spans 270 residues: Cross-pathway control protein 1 (270 aa).

Disordered regions lie at residues 114–135 (QAQA…QTQP) and 153–213 (QTVH…IIVE). Positions 184 to 195 (SVSPPSGRHSSV) are enriched in low complexity. In terms of domain architecture, bZIP spans 216–270 (SDVVAMKRARNTLAARKSRERKAQRLEELEAKIEELIAERDRWKNLALAHGASTE). The basic motif stretch occupies residues 222 to 240 (KRARNTLAARKSRERKAQR). Residues 241-248 (LEELEAKI) form a leucine-zipper region.

This sequence belongs to the bZIP family. GCN4 subfamily. In terms of assembly, binds DNA as a dimer.

It is found in the nucleus. Its function is as follows. In N.crassa grown under amino acid starvation conditions, this protein is required for increasing the transcription of the genes coding for many amino acid biosynthetic pathways enzymes. This transcription factor binds and recognize the DNA sequence: 5'-TGACTC-3'. This chain is Cross-pathway control protein 1 (cpc-1), found in Neurospora crassa (strain ATCC 24698 / 74-OR23-1A / CBS 708.71 / DSM 1257 / FGSC 987).